We begin with the raw amino-acid sequence, 552 residues long: uncharacterized protein (552 aa).

This sequence belongs to the transposase 25 family.

This is an uncharacterized protein from Sinorhizobium fredii (strain NBRC 101917 / NGR234).